We begin with the raw amino-acid sequence, 122 residues long: Small ribosomal subunit protein uS13 (122 aa).

The disordered stretch occupies residues 94–122; it reads GLPVRGQVTQKNARTRKGPRKTVAGKKGK. Residues 106 to 122 show a composition bias toward basic residues; it reads ARTRKGPRKTVAGKKGK.

The protein belongs to the universal ribosomal protein uS13 family. Part of the 30S ribosomal subunit. Forms a loose heterodimer with protein S19. Forms two bridges to the 50S subunit in the 70S ribosome.

Functionally, located at the top of the head of the 30S subunit, it contacts several helices of the 16S rRNA. In the 70S ribosome it contacts the 23S rRNA (bridge B1a) and protein L5 of the 50S subunit (bridge B1b), connecting the 2 subunits; these bridges are implicated in subunit movement. Contacts the tRNAs in the A and P-sites. The polypeptide is Small ribosomal subunit protein uS13 (Mycoplasma mobile (strain ATCC 43663 / 163K / NCTC 11711) (Mesomycoplasma mobile)).